The sequence spans 291 residues: 3-methyl-2-oxobutanoate hydroxymethyltransferase (291 aa).

Positions 1-10 are enriched in polar residues; that stretch reads MTQLSAAQTP. Residues 1 to 20 are disordered; it reads MTQLSAAQTPQPKPADGNRA. The Mg(2+) site is built by D71 and D110. 3-methyl-2-oxobutanoate-binding positions include 71–72, D110, and K140; that span reads DS. E142 is a binding site for Mg(2+). The active-site Proton acceptor is E208.

This sequence belongs to the PanB family. As to quaternary structure, homodecamer; pentamer of dimers. The cofactor is Mg(2+).

It is found in the cytoplasm. It catalyses the reaction 3-methyl-2-oxobutanoate + (6R)-5,10-methylene-5,6,7,8-tetrahydrofolate + H2O = 2-dehydropantoate + (6S)-5,6,7,8-tetrahydrofolate. It functions in the pathway cofactor biosynthesis; (R)-pantothenate biosynthesis; (R)-pantoate from 3-methyl-2-oxobutanoate: step 1/2. Its function is as follows. Catalyzes the reversible reaction in which hydroxymethyl group from 5,10-methylenetetrahydrofolate is transferred onto alpha-ketoisovalerate to form ketopantoate. The protein is 3-methyl-2-oxobutanoate hydroxymethyltransferase of Streptomyces coelicolor (strain ATCC BAA-471 / A3(2) / M145).